We begin with the raw amino-acid sequence, 491 residues long: Delayed-rectifier potassium channel regulatory subunit KCNS3 (491 aa).

Residues 1 to 182 (MVFGEFFHRP…IRMENPAYCL (182 aa)) are Cytoplasmic-facing. Residues 183-204 (SAKLIAISSLSVVLASIVAMCV) traverse the membrane as a helical segment. The Extracellular segment spans residues 205–220 (HSMSEFQNEDGEVDDP). The chain crosses the membrane as a helical span at residues 221 to 243 (VLEGVEIACIAWFTGELAVRLVA). At 244–254 (APCQKKFWKNP) the chain is on the cytoplasmic side. A helical transmembrane segment spans residues 255-275 (LNIIDFVSIIPFYATLAVDTK). At 276 to 285 (EEESEDIENM) the chain is on the extracellular side. Residues 286 to 306 (GKVVQILRLMRIFRILKLARH) traverse the membrane as a helical; Voltage-sensor segment. At 307-321 (SVGLRSLGATLRHSY) the chain is on the cytoplasmic side. The chain crosses the membrane as a helical span at residues 322 to 343 (HEVGLLLLFLSVGISIFSVLIY). Topologically, residues 344 to 357 (SVEKDDHTSSLTSI) are extracellular. The segment at residues 358–369 (PICWWWATISMT) is an intramembrane region (helical). The short motif at 370 to 375 (TVGYGD) is the Selectivity filter element. An intramembrane segment occupies 370-377 (TVGYGDTH). The Extracellular portion of the chain corresponds to 378 to 384 (PVTLAGK). Residues 385 to 413 (LIASTCIICGILVVALPITIIFNKFSKYY) traverse the membrane as a helical segment. Over 414-491 (QKQKDIDVDQ…TASLENCTAK (78 aa)) the chain is Cytoplasmic.

It belongs to the potassium channel family. S (TC 1.A.1.2) subfamily. Kv9.3/KCNS3 sub-subfamily. Heterotetramer with KCNB1. Does not form homomultimers.

It is found in the cell membrane. Potassium channel regulatory subunit that modulates the delayed rectifier potassium channel activity of KCNB1 by namely slowing down the deactivation and inactivation time constants. While it does not form functional channel on its own, it can form functional heterotetrameric channels with KCNB1. This is Delayed-rectifier potassium channel regulatory subunit KCNS3 from Oryctolagus cuniculus (Rabbit).